We begin with the raw amino-acid sequence, 1383 residues long: DNA-directed RNA polymerase subunit beta'' (1383 aa).

Zn(2+)-binding residues include Cys-220, Cys-289, Cys-296, and Cys-299.

It belongs to the RNA polymerase beta' chain family. RpoC2 subfamily. As to quaternary structure, in plastids the minimal PEP RNA polymerase catalytic core is composed of four subunits: alpha, beta, beta', and beta''. When a (nuclear-encoded) sigma factor is associated with the core the holoenzyme is formed, which can initiate transcription. Requires Zn(2+) as cofactor.

It is found in the plastid. The protein localises to the chloroplast. It catalyses the reaction RNA(n) + a ribonucleoside 5'-triphosphate = RNA(n+1) + diphosphate. DNA-dependent RNA polymerase catalyzes the transcription of DNA into RNA using the four ribonucleoside triphosphates as substrates. The sequence is that of DNA-directed RNA polymerase subunit beta'' from Oenothera biennis (German evening primrose).